The sequence spans 178 residues: uncharacterized protein (178 aa).

It belongs to the IIV-6 136R family.

This is an uncharacterized protein from Invertebrate iridescent virus 6 (IIV-6).